A 198-amino-acid chain; its full sequence is ATP-dependent Clp protease proteolytic subunit 1 (198 aa).

S96 serves as the catalytic Nucleophile. The active site involves H121.

Belongs to the peptidase S14 family. Fourteen ClpP subunits assemble into 2 heptameric rings which stack back to back to give a disk-like structure with a central cavity, resembling the structure of eukaryotic proteasomes.

The protein resides in the cytoplasm. It catalyses the reaction Hydrolysis of proteins to small peptides in the presence of ATP and magnesium. alpha-casein is the usual test substrate. In the absence of ATP, only oligopeptides shorter than five residues are hydrolyzed (such as succinyl-Leu-Tyr-|-NHMec, and Leu-Tyr-Leu-|-Tyr-Trp, in which cleavage of the -Tyr-|-Leu- and -Tyr-|-Trp bonds also occurs).. Functionally, cleaves peptides in various proteins in a process that requires ATP hydrolysis. Has a chymotrypsin-like activity. Plays a major role in the degradation of misfolded proteins. The sequence is that of ATP-dependent Clp protease proteolytic subunit 1 from Synechocystis sp. (strain ATCC 27184 / PCC 6803 / Kazusa).